Here is a 419-residue protein sequence, read N- to C-terminus: Pregnancy-specific beta-1-glycoprotein 4 (419 aa).

The N-terminal stretch at 1-34 is a signal peptide; that stretch reads MGPLSAPPCTQRITWKGVLLTASLLNFWNPPTTA. One can recognise an Ig-like V-type domain in the interval 35–144; that stretch reads QVTIEAQPPK…TGHFTFTLHL (110 aa). N-linked (GlcNAc...) asparagine glycosylation is found at N104, N111, N199, N268, N299, and N303. Ig-like C2-type domains are found at residues 147-234, 237-327, and 332-410; these read PKPS…VTLN, PKLS…VTLN, and PDLP…KSIT. Intrachain disulfides connect C169-C217, C262-C310, and C354-C394.

This sequence belongs to the immunoglobulin superfamily. CEA family.

It localises to the secreted. This Homo sapiens (Human) protein is Pregnancy-specific beta-1-glycoprotein 4 (PSG4).